We begin with the raw amino-acid sequence, 165 residues long: MSLNQLKAPRGANRAKKRVGRGQGSGLGKTAGRGGKGQKARSGNMHFEGFEGGQMPLQRRLPKFGFHNIFRRELEEVKVGDLQGLSGVVDPAALKSAGLVRGNRDGVVVLAGGELSSALTVKVHRVTAGARATIEKAGGKVELIPAPQTMHQKAKAAKKAAAQAK.

Residues 1 to 44 (MSLNQLKAPRGANRAKKRVGRGQGSGLGKTAGRGGKGQKARSGN) form a disordered region. Gly residues predominate over residues 21-37 (RGQGSGLGKTAGRGGKG).

It belongs to the universal ribosomal protein uL15 family. In terms of assembly, part of the 50S ribosomal subunit.

In terms of biological role, binds to the 23S rRNA. The sequence is that of Large ribosomal subunit protein uL15 from Anaeromyxobacter dehalogenans (strain 2CP-1 / ATCC BAA-258).